The chain runs to 195 residues: Imidazoleglycerol-phosphate dehydratase (195 aa).

Belongs to the imidazoleglycerol-phosphate dehydratase family.

It is found in the cytoplasm. The enzyme catalyses D-erythro-1-(imidazol-4-yl)glycerol 3-phosphate = 3-(imidazol-4-yl)-2-oxopropyl phosphate + H2O. It participates in amino-acid biosynthesis; L-histidine biosynthesis; L-histidine from 5-phospho-alpha-D-ribose 1-diphosphate: step 6/9. This is Imidazoleglycerol-phosphate dehydratase from Cupriavidus pinatubonensis (strain JMP 134 / LMG 1197) (Cupriavidus necator (strain JMP 134)).